The chain runs to 215 residues: Kunitz trypsin inhibitor 4 (215 aa).

An N-terminal signal peptide occupies residues 1–28 (MTKTTKTMNPKFYLVLALTAVLASNAYG). 2 disulfides stabilise this stretch: cysteine 66–cysteine 112 and cysteine 165–cysteine 176. A glycan (N-linked (GlcNAc...) asparagine) is linked at asparagine 206.

The protein belongs to the protease inhibitor I3 (leguminous Kunitz-type inhibitor) family. In terms of tissue distribution, expressed in roots.

The protein resides in the endoplasmic reticulum. Functionally, exhibits Kunitz trypsin protease inhibitor activity. Involved in modulating programmed cell death (PCD) in plant-pathogen interactions. Can inhibit both serine proteases and cysteine proteases. May be involved in the modulation of the proteases that participate in the hydrolysis of dietary proteins in the gut of spider mites. This Arabidopsis thaliana (Mouse-ear cress) protein is Kunitz trypsin inhibitor 4.